Here is a 989-residue protein sequence, read N- to C-terminus: MEPPAAKRSRGCPAGPEERDAGAGAARGRGRPEALLDLSAKRVAESWAFEQVEERFSRVPEPVQKRIVFWSFPRSEREICMYSSLGYPPPEGEHDARVPFTRGLHLLQSGAVDRVLQVGFHLSGNIREPGSPGEPERLYHVSISFDRCKITSVSCGCDNRDLFYCAHVVALSLYRIRHAHQVELRLPISETLSQMNRDQLQKFVQYLISAHHTEVLPTAQRLADEILLLGSEINLVNGAPDPTAGAGIEDANCWHLDEEQIQEQVKQLLSNGGYYGASQQLRSMFSKVREMLRMRDSNGARMLILMTEQFLQDTRLALWRQQGAGMTDKCRQLWDELGALWVCVVLSPHCKPEERAGWLQLLSRWDKLDVCPLEEGNYSFDGPSLQPTMAPAPELLQKGSTCITNTEGWVGHPLDPIGCLCRALLEACRLEEETLTLYPDSGPEKRKVAYQHVPVPGSPGESYLVLALEVALLGLGQQRALPEGLYAQDKVVRNEEQLLALLEEVELDERLVQVLRKQAGLLLEGGPFSGFGEVLFRESVPMHTCARYLFTALLPHDPDLAYRLALRAMRLPILETAFPAGEPHPSPLDSIMSNRFPRWFILGHLETRQCELASTMLTAAKGDPKWLHTVLGSIQQNIHSPALLFKLAQDACKTATPVSAPPDTTLLGIALELGLQVMRMTLNVMTWRRREMVRWLVSCATEIGPQALMNIMQNWYSLFTPVEAATIVAVTGTTHATLLRLQLDTSRREELWACARTLALQCAMKDPQNCALPALTLCEKNHSAFEAAYQIVLDAAAGGLGHAHLFTVARYMEHRGLPLRAYKLATLALAQLSIAFNQDSHPAVNDVLWACSLSHSLGRHELSAIVPLIIRSIHCAPMLSDILRRWTLSAPGLGPLGARRAAKPLGADRAPLCQLLDAAVTAYITTSHSRLTHISPRHYGDFIEFLGKARETFLLAPDGHLQFSQFLENLKQTYKGKKKLMLLVRERFG.

A disordered region spans residues Met1–Pro32. The SWIM-type zinc-finger motif lies at Tyr139–Ile176.

This Homo sapiens (Human) protein is Zinc finger SWIM domain-containing protein 4 (ZSWIM4).